A 523-amino-acid polypeptide reads, in one-letter code: UDP-glucuronosyltransferase 3A1 (523 aa).

Residues 1 to 22 (MVGQRVLLLVAFLLSGVLLSEA) form the signal peptide. The Extracellular segment spans residues 23-483 (AKILTISTLG…YAFQQPWHEQ (461 aa)). Asn52 carries N-linked (GlcNAc...) asparagine glycosylation. Residues 484 to 504 (YLIDVFVFLLGLTLGTMWLCG) traverse the membrane as a helical segment. Topologically, residues 505–523 (KLLGVVARWLRGARKVKKT) are cytoplasmic.

The protein belongs to the UDP-glycosyltransferase family.

It is found in the membrane. It carries out the reaction glucuronate acceptor + UDP-alpha-D-glucuronate = acceptor beta-D-glucuronoside + UDP + H(+). Its function is as follows. UDP-glucuronosyltransferases catalyze phase II biotransformation reactions in which lipophilic substrates are conjugated with glucuronic acid to increase water solubility and enhance excretion. They are of major importance in the conjugation and subsequent elimination of potentially toxic xenobiotics and endogenous compounds. The chain is UDP-glucuronosyltransferase 3A1 (UGT3A1) from Homo sapiens (Human).